A 968-amino-acid chain; its full sequence is RNA polymerase-associated protein RapA (968 aa).

Residues 164–334 (DVGRRHAPRV…FARLRLLDPN (171 aa)) enclose the Helicase ATP-binding domain. An ATP-binding site is contributed by 177–184 (DEVGLGKT). The DEAH box signature appears at 280–283 (DEAH). The Helicase C-terminal domain occupies 490–662 (RVEWLMGYLT…YLASPDQTEG (173 aa)).

This sequence belongs to the SNF2/RAD54 helicase family. RapA subfamily. As to quaternary structure, interacts with the RNAP. Has a higher affinity for the core RNAP than for the holoenzyme. Its ATPase activity is stimulated by binding to RNAP.

Transcription regulator that activates transcription by stimulating RNA polymerase (RNAP) recycling in case of stress conditions such as supercoiled DNA or high salt concentrations. Probably acts by releasing the RNAP, when it is trapped or immobilized on tightly supercoiled DNA. Does not activate transcription on linear DNA. Probably not involved in DNA repair. This Escherichia fergusonii (strain ATCC 35469 / DSM 13698 / CCUG 18766 / IAM 14443 / JCM 21226 / LMG 7866 / NBRC 102419 / NCTC 12128 / CDC 0568-73) protein is RNA polymerase-associated protein RapA.